A 298-amino-acid chain; its full sequence is Ethanolamine ammonia-lyase small subunit (298 aa).

The interval 15-43 is disordered; the sequence is ASMGQDVPQPVAPSTQEGAKPQRAAPTAT. Val-210, Glu-231, and Cys-261 together coordinate adenosylcob(III)alamin.

The protein belongs to the EutC family. As to quaternary structure, the basic unit is a heterodimer which dimerizes to form tetramers. The heterotetramers trimerize; 6 large subunits form a core ring with 6 small subunits projecting outwards. Adenosylcob(III)alamin serves as cofactor.

The protein localises to the bacterial microcompartment. The catalysed reaction is ethanolamine = acetaldehyde + NH4(+). It participates in amine and polyamine degradation; ethanolamine degradation. Catalyzes the deamination of various vicinal amino-alcohols to oxo compounds. Allows this organism to utilize ethanolamine as the sole source of nitrogen and carbon in the presence of external vitamin B12. The chain is Ethanolamine ammonia-lyase small subunit from Salmonella arizonae (strain ATCC BAA-731 / CDC346-86 / RSK2980).